A 207-amino-acid polypeptide reads, in one-letter code: dTTP/UTP pyrophosphatase (207 aa).

The Proton acceptor role is filled by Asp-87.

This sequence belongs to the Maf family. YhdE subfamily. A divalent metal cation serves as cofactor.

It is found in the cytoplasm. It catalyses the reaction dTTP + H2O = dTMP + diphosphate + H(+). The catalysed reaction is UTP + H2O = UMP + diphosphate + H(+). Its function is as follows. Nucleoside triphosphate pyrophosphatase that hydrolyzes dTTP and UTP. May have a dual role in cell division arrest and in preventing the incorporation of modified nucleotides into cellular nucleic acids. This is dTTP/UTP pyrophosphatase from Bordetella pertussis (strain Tohama I / ATCC BAA-589 / NCTC 13251).